The chain runs to 136 residues: Large ribosomal subunit protein bL20 (136 aa).

This sequence belongs to the bacterial ribosomal protein bL20 family.

Functionally, binds directly to 23S ribosomal RNA and is necessary for the in vitro assembly process of the 50S ribosomal subunit. It is not involved in the protein synthesizing functions of that subunit. This is Large ribosomal subunit protein bL20 from Tropheryma whipplei (strain Twist) (Whipple's bacillus).